We begin with the raw amino-acid sequence, 552 residues long: MKDRRRRETVSWNRFFWCTLLLVLSCVLFTASTFREKFQPEIVSAWRQPAMEATTTIMSTNSPAKPSISIRETVMLPDQVLIFVNYPQSSRLFTKEDFSCVYFSRNSTSLSETQLKKPPNQIDGTDVNNQIVRCPLNPRGFSVSLELKSGGGYINPGPTHRWDSLVYEAMIDRDNTTVVFVKGFNLRADRIYNASKFECVYGWDFRKTKFVLRSNVISIAQEIVRCQTPLSILNNQLKVNNAIKVSIRLKGKGTLHSIARPGVQLLTDPEPGLRGEKPHEMCICTMLRNQGRFLKEWVMYHSQIGVERWFIYDNNSEDDIDSVIESLIDAKFNISRHVWPWVKAQEAGFAHCALRARGLCEWVGFIDVDEFFHLPTGLNLQDAVKNQSNSGNNVAELRVSCHSFGPSGLKHVPAQGVTVGYTCRMMLPERHKSIVKPEALNSTLINVVHHFHLRDGFRYVNADKGILVINHYKYQVWEVFKEKFYRRVATYVVDWQNEQNVGSKDRAPGLGTRAVEPPDWSSRFCEVSDTGLRDRILQNFLDPLTDLLPWQI.

Residues 12–34 (WNRFFWCTLLLVLSCVLFTASTF) traverse the membrane as a helical; Signal-anchor segment. The 244-residue stretch at 277–520 (KPHEMCICTM…GTRAVEPPDW (244 aa)) folds into the GT92 domain.

This sequence belongs to the glycosyltransferase 92 family.

It is found in the membrane. The chain is Glycosyltransferase family 92 protein RCOM_0530710 from Ricinus communis (Castor bean).